Consider the following 122-residue polypeptide: Proteasome assembly chaperone 3 (122 aa).

M1 bears the N-acetylmethionine mark.

Belongs to the PSMG3 family. As to quaternary structure, homodimer. Interacts with PSMG4. Interacts directly with alpha and beta subunits of the 20S proteasome but dissociates before the formation of half-proteasomes, probably upon recruitment of POMP.

Its function is as follows. Chaperone protein which promotes assembly of the 20S proteasome. May cooperate with PSMG1-PSMG2 heterodimers to orchestrate the correct assembly of proteasomes. The sequence is that of Proteasome assembly chaperone 3 from Homo sapiens (Human).